The sequence spans 501 residues: Myosin heavy chain, embryonic smooth muscle isoform (501 aa).

Residues 1–457 adopt a coiled-coil conformation; it reads REAREKETKA…TLKNRLRRGG (457 aa). The segment at 1–501 is rodlike tail (S2 and LMM domains); that stretch reads REAREKETKA…VNETQPPQSE (501 aa). Disordered stretches follow at residues 182 to 202, 221 to 254, and 397 to 501; these read YQRELEEARGSRDEIFAQSKE, LASSERARRHAEQERDELADEIANSASGKSALLD, and MEKA…PQSE. Over residues 223–233 the composition is skewed to basic and acidic residues; that stretch reads SSERARRHAEQ. Over residues 492–501 the composition is skewed to polar residues; it reads VNETQPPQSE.

In terms of assembly, muscle myosin is a hexameric protein that consists of 2 heavy chain subunits (MHC), 2 alkali light chain subunits (MLC) and 2 regulatory light chain subunits (MLC-2).

It localises to the cytoplasm. It is found in the myofibril. In terms of biological role, muscle contraction. This is Myosin heavy chain, embryonic smooth muscle isoform from Oryctolagus cuniculus (Rabbit).